A 415-amino-acid chain; its full sequence is Putative serpin-Z6C (415 aa).

An RCL region spans residues 357-381 (GTEAAAATAVCLTFASAAPSSRRPA).

This sequence belongs to the serpin family.

Functionally, probable serine protease inhibitor. The sequence is that of Putative serpin-Z6C from Oryza sativa subsp. japonica (Rice).